Reading from the N-terminus, the 271-residue chain is Formamidopyrimidine-DNA glycosylase (271 aa).

The Schiff-base intermediate with DNA role is filled by Pro-2. Glu-3 (proton donor) is an active-site residue. Lys-57 serves as the catalytic Proton donor; for beta-elimination activity. DNA is bound by residues His-90, Arg-109, and Lys-151. The FPG-type zinc-finger motif lies at 236 to 270; that stretch reads HVYGRGGETCTQCGNLLSEIRLGQRTTVFCSICQP. Catalysis depends on Arg-260, which acts as the Proton donor; for delta-elimination activity.

Belongs to the FPG family. In terms of assembly, monomer. The cofactor is Zn(2+).

The enzyme catalyses Hydrolysis of DNA containing ring-opened 7-methylguanine residues, releasing 2,6-diamino-4-hydroxy-5-(N-methyl)formamidopyrimidine.. The catalysed reaction is 2'-deoxyribonucleotide-(2'-deoxyribose 5'-phosphate)-2'-deoxyribonucleotide-DNA = a 3'-end 2'-deoxyribonucleotide-(2,3-dehydro-2,3-deoxyribose 5'-phosphate)-DNA + a 5'-end 5'-phospho-2'-deoxyribonucleoside-DNA + H(+). Involved in base excision repair of DNA damaged by oxidation or by mutagenic agents. Acts as a DNA glycosylase that recognizes and removes damaged bases. Has a preference for oxidized purines, such as 7,8-dihydro-8-oxoguanine (8-oxoG). Has AP (apurinic/apyrimidinic) lyase activity and introduces nicks in the DNA strand. Cleaves the DNA backbone by beta-delta elimination to generate a single-strand break at the site of the removed base with both 3'- and 5'-phosphates. The protein is Formamidopyrimidine-DNA glycosylase of Shewanella oneidensis (strain ATCC 700550 / JCM 31522 / CIP 106686 / LMG 19005 / NCIMB 14063 / MR-1).